A 340-amino-acid chain; its full sequence is Anthranilate phosphoribosyltransferase (340 aa).

Residues Gly80, 83–84, Thr88, 90–93, 108–116, and Ser120 contribute to the 5-phospho-alpha-D-ribose 1-diphosphate site; these read GD, NIST, and KHGNRAMSS. Gly80 is an anthranilate binding site. Ser92 lines the Mg(2+) pocket. Residue Asn111 participates in anthranilate binding. Residue Arg166 participates in anthranilate binding. Mg(2+) contacts are provided by Asp225 and Glu226.

This sequence belongs to the anthranilate phosphoribosyltransferase family. Homodimer. Mg(2+) is required as a cofactor.

The catalysed reaction is N-(5-phospho-beta-D-ribosyl)anthranilate + diphosphate = 5-phospho-alpha-D-ribose 1-diphosphate + anthranilate. It functions in the pathway amino-acid biosynthesis; L-tryptophan biosynthesis; L-tryptophan from chorismate: step 2/5. Its function is as follows. Catalyzes the transfer of the phosphoribosyl group of 5-phosphorylribose-1-pyrophosphate (PRPP) to anthranilate to yield N-(5'-phosphoribosyl)-anthranilate (PRA). In Chloroflexus aggregans (strain MD-66 / DSM 9485), this protein is Anthranilate phosphoribosyltransferase.